Reading from the N-terminus, the 498-residue chain is ATP synthase subunit beta, chloroplastic (498 aa).

172–179 (GGAGVGKT) serves as a coordination point for ATP.

The protein belongs to the ATPase alpha/beta chains family. As to quaternary structure, F-type ATPases have 2 components, CF(1) - the catalytic core - and CF(0) - the membrane proton channel. CF(1) has five subunits: alpha(3), beta(3), gamma(1), delta(1), epsilon(1). CF(0) has four main subunits: a(1), b(1), b'(1) and c(9-12).

The protein localises to the plastid. It localises to the chloroplast thylakoid membrane. It catalyses the reaction ATP + H2O + 4 H(+)(in) = ADP + phosphate + 5 H(+)(out). Functionally, produces ATP from ADP in the presence of a proton gradient across the membrane. The catalytic sites are hosted primarily by the beta subunits. The polypeptide is ATP synthase subunit beta, chloroplastic (Nicotiana bigelovii (Bigelov's tobacco)).